The chain runs to 352 residues: Maleylacetate reductase (352 aa).

This sequence belongs to the iron-containing alcohol dehydrogenase family.

The catalysed reaction is 3-oxoadipate + NAD(+) = maleylacetate + NADH + H(+). It carries out the reaction 3-oxoadipate + NADP(+) = maleylacetate + NADPH + H(+). Its pathway is aromatic compound metabolism; 3-chlorocatechol degradation. The protein is Maleylacetate reductase (clcE) of Pseudomonas knackmussii (strain DSM 6978 / CCUG 54928 / LMG 23759 / B13).